Reading from the N-terminus, the 217-residue chain is Insulin-like growth factor 2.L (217 aa).

The signal sequence occupies residues 1–56; sequence MEQLSCKHRSSSMEAEAQLCRQTESRSTQLPRMSVMRHLFLLSITFLVYTLDSAKA. The b stretch occupies residues 57 to 83; that stretch reads YRPTETLCGGELVDTLQFVCGDRGFYF. Cystine bridges form between C64/C103, C76/C116, and C102/C107. The tract at residues 84–96 is c; the sequence is STNNGRSNRRSNR. The segment at 97–117 is a; the sequence is GIVEECCFRSCDLELLETYCA. The segment at 118–123 is d; that stretch reads KPSKNE. The propeptide at 124–217 is e peptide; the sequence is RDVSTAPATA…LQQTSEPSHN (94 aa).

The protein belongs to the insulin family.

The protein localises to the secreted. In terms of biological role, the insulin-like growth factors, isolated from plasma, are structurally and functionally related to insulin but have a much higher growth-promoting activity. Promotes anterior neural development. Acts as a ligand for integrin which is required for IGF2 signaling. The chain is Insulin-like growth factor 2.L from Xenopus laevis (African clawed frog).